Reading from the N-terminus, the 760-residue chain is DEAD-box ATP-dependent RNA helicase 24 (760 aa).

Disordered stretches follow at residues 1–76 (MSNR…GEVD) and 90–113 (QEMK…DDDD). The segment covering 14–27 (NRQTSYSFERSQAP) has biased composition (polar residues). Residues 41-64 (NSEDADLDNIDYMENEEAEEDIEE) are compositionally biased toward acidic residues. Residues 99 to 109 (KPKEKLERYKD) show a composition bias toward basic and acidic residues. Ser160 bears the Phosphoserine mark. Positions 228–256 (KTFEDCGFSSQIMSAIKKQAYEKPTAIQC) match the Q motif motif. In terms of domain architecture, Helicase ATP-binding spans 259–434 (LPIVLSGRDV…REILSDPIRV (176 aa)). 272-279 (AKTGSGKT) serves as a coordination point for ATP. Positions 382 to 385 (DEAD) match the DEAD box motif. Residues 459–608 (KLPWLLEKLP…NVPPELTDLA (150 aa)) enclose the Helicase C-terminal domain. 3 disordered regions span residues 604 to 638 (LTDL…KGVR), 647 to 666 (GFSS…SRSG), and 706 to 760 (FVSG…GWDN). Residues 615-628 (KSKRDGRKGGKKGR) are compositionally biased toward basic residues. A compositionally biased stretch (gly residues) spans 629–638 (GGGGGNKGVR). Residues 649–666 (SSESSRTPSSKAAPSRSG) show a composition bias toward polar residues. Residues 707-716 (VSGGTIGGDM) are compositionally biased toward gly residues. Residues 718-732 (RTQSQAPPVAPTQNA) are compositionally biased toward polar residues. Residues 733–745 (SSHNSSQNHSQSS) are compositionally biased toward low complexity. The span at 750–760 (RERKRRSGWDN) shows a compositional bias: basic residues.

Belongs to the DEAD box helicase family.

The enzyme catalyses ATP + H2O = ADP + phosphate + H(+). In Arabidopsis thaliana (Mouse-ear cress), this protein is DEAD-box ATP-dependent RNA helicase 24 (RH24).